The chain runs to 510 residues: 2,3-bisphosphoglycerate-independent phosphoglycerate mutase (510 aa).

Mn(2+) contacts are provided by Asp13 and Ser63. Catalysis depends on Ser63, which acts as the Phosphoserine intermediate. Substrate contacts are provided by residues His124, Arg154–Asp155, Arg186, Arg192, Arg262–Arg265, and Lys334. Mn(2+)-binding residues include Asp401, His405, Asp442, His443, and His461.

The protein belongs to the BPG-independent phosphoglycerate mutase family. In terms of assembly, monomer. Requires Mn(2+) as cofactor.

It carries out the reaction (2R)-2-phosphoglycerate = (2R)-3-phosphoglycerate. Its pathway is carbohydrate degradation; glycolysis; pyruvate from D-glyceraldehyde 3-phosphate: step 3/5. Functionally, catalyzes the interconversion of 2-phosphoglycerate and 3-phosphoglycerate. In Vibrio cholerae serotype O1 (strain ATCC 39541 / Classical Ogawa 395 / O395), this protein is 2,3-bisphosphoglycerate-independent phosphoglycerate mutase.